The following is a 137-amino-acid chain: Small ribosomal subunit protein uS12 (137 aa).

The tract at residues 1–26 is disordered; the sequence is MPTINQLVRKPRQSKIKKSTSPALNK. A compositionally biased stretch (basic residues) spans 9-18; the sequence is RKPRQSKIKK.

It belongs to the universal ribosomal protein uS12 family. Part of the 30S ribosomal subunit. Contacts proteins S8 and S17. May interact with IF1 in the 30S initiation complex.

Functionally, with S4 and S5 plays an important role in translational accuracy. Interacts with and stabilizes bases of the 16S rRNA that are involved in tRNA selection in the A site and with the mRNA backbone. Located at the interface of the 30S and 50S subunits, it traverses the body of the 30S subunit contacting proteins on the other side and probably holding the rRNA structure together. The combined cluster of proteins S8, S12 and S17 appears to hold together the shoulder and platform of the 30S subunit. In Listeria innocua serovar 6a (strain ATCC BAA-680 / CLIP 11262), this protein is Small ribosomal subunit protein uS12.